Here is a 590-residue protein sequence, read N- to C-terminus: Methionine--tRNA ligase, mitochondrial (590 aa).

A mitochondrion-targeting transit peptide spans 1-26 (MRTRFLFLTSGCKAVPELHKIVLANA). Residues 51–61 (FYVNASPHLGH) carry the 'HIGH' region motif. Positions 342-346 (KMSKS) match the 'KMSKS' region motif. An ATP-binding site is contributed by K345. Residues 570–590 (LESQRADQQKNRKMEKGSNLK) form a disordered region. Positions 571–590 (ESQRADQQKNRKMEKGSNLK) are enriched in basic and acidic residues.

It belongs to the class-I aminoacyl-tRNA synthetase family.

The protein resides in the mitochondrion matrix. The enzyme catalyses tRNA(Met) + L-methionine + ATP = L-methionyl-tRNA(Met) + AMP + diphosphate. The chain is Methionine--tRNA ligase, mitochondrial (mars2) from Takifugu rubripes (Japanese pufferfish).